The sequence spans 396 residues: Aspartate aminotransferase (396 aa).

The L-aspartate site is built by glycine 34, tryptophan 130, and asparagine 183. Lysine 246 is modified (N6-(pyridoxal phosphate)lysine). Arginine 374 contacts L-aspartate.

Belongs to the class-I pyridoxal-phosphate-dependent aminotransferase family. Homodimer. It depends on pyridoxal 5'-phosphate as a cofactor.

The protein resides in the cytoplasm. It carries out the reaction L-aspartate + 2-oxoglutarate = oxaloacetate + L-glutamate. This Haemophilus influenzae (strain ATCC 51907 / DSM 11121 / KW20 / Rd) protein is Aspartate aminotransferase (aspC).